A 754-amino-acid polypeptide reads, in one-letter code: 5-methyltetrahydropteroyltriglutamate--homocysteine methyltransferase (754 aa).

5-methyltetrahydropteroyltri-L-glutamate is bound by residues 17 to 20 (RELK) and Lys117. Residues 431–433 (IGS) and Glu484 contribute to the L-homocysteine site. Residues 431 to 433 (IGS) and Glu484 contribute to the L-methionine site. 5-methyltetrahydropteroyltri-L-glutamate is bound by residues 515–516 (RC) and Trp561. Asp599 serves as a coordination point for L-homocysteine. Asp599 provides a ligand contact to L-methionine. Glu605 contributes to the 5-methyltetrahydropteroyltri-L-glutamate binding site. Positions 641, 643, and 665 each coordinate Zn(2+). His694 acts as the Proton donor in catalysis. Cys726 is a Zn(2+) binding site.

This sequence belongs to the vitamin-B12 independent methionine synthase family. The cofactor is Zn(2+).

The enzyme catalyses 5-methyltetrahydropteroyltri-L-glutamate + L-homocysteine = tetrahydropteroyltri-L-glutamate + L-methionine. It functions in the pathway amino-acid biosynthesis; L-methionine biosynthesis via de novo pathway; L-methionine from L-homocysteine (MetE route): step 1/1. Its function is as follows. Catalyzes the transfer of a methyl group from 5-methyltetrahydrofolate to homocysteine resulting in methionine formation. In Salmonella agona (strain SL483), this protein is 5-methyltetrahydropteroyltriglutamate--homocysteine methyltransferase.